A 235-amino-acid chain; its full sequence is Heme oxygenase (235 aa).

A heme b-binding site is contributed by H19.

The protein belongs to the heme oxygenase family.

It is found in the plastid. It localises to the chloroplast. The catalysed reaction is heme b + 3 reduced [NADPH--hemoprotein reductase] + 3 O2 = biliverdin IXalpha + CO + Fe(2+) + 3 oxidized [NADPH--hemoprotein reductase] + 3 H2O + H(+). Catalyzes the opening of the heme ring with the release of iron. Key enzyme in the synthesis of the chromophoric part of the photosynthetic antennae. The polypeptide is Heme oxygenase (pbsA) (Rhodella violacea (Red alga)).